The primary structure comprises 192 residues: Xanthine phosphoribosyltransferase (192 aa).

Residues leucine 20 and asparagine 27 each contribute to the xanthine site. Alanine 128 to alanine 132 is a 5-phospho-alpha-D-ribose 1-diphosphate binding site. Xanthine is bound at residue lysine 156.

It belongs to the purine/pyrimidine phosphoribosyltransferase family. Xpt subfamily. Homodimer.

It is found in the cytoplasm. The catalysed reaction is XMP + diphosphate = xanthine + 5-phospho-alpha-D-ribose 1-diphosphate. Its pathway is purine metabolism; XMP biosynthesis via salvage pathway; XMP from xanthine: step 1/1. Functionally, converts the preformed base xanthine, a product of nucleic acid breakdown, to xanthosine 5'-monophosphate (XMP), so it can be reused for RNA or DNA synthesis. This Ligilactobacillus salivarius (strain UCC118) (Lactobacillus salivarius) protein is Xanthine phosphoribosyltransferase.